Reading from the N-terminus, the 134-residue chain is Crustacean hyperglycemic hormones isoform A (134 aa).

The N-terminal stretch at 1–24 (MMACRTLCLVVVMVASLGTSGVGG) is a signal peptide. Gln-61 bears the Pyrrolidone carboxylic acid mark. Residue Phe-63 is modified to D-phenylalanine; in form CHH-A-II. Cystine bridges form between Cys-67–Cys-103, Cys-83–Cys-99, and Cys-86–Cys-112. A Valine amide modification is found at Val-132.

This sequence belongs to the arthropod CHH/MIH/GIH/VIH hormone family. In terms of processing, stereoinversion of L-Phe (form CHH-A-I) to D-Phe (form CHH-A-II). Produced by the medulla terminalis X-organ in the eyestalks and transported to the sinus gland where they are stored and released. Present also in the ventral nervous system.

Its subcellular location is the secreted. Its function is as follows. CHH is the most abundant hormone in the sinus gland of isopods and decapods which controls the blood sugar level. Has a secretagogue action over the amylase released from the midgut gland. May act as a stress hormone. In terms of biological role, MIH may inhibit Y-organs where molting hormone (ecdysteroid) is secreted and a molting cycle is initiated when MIH secretion diminishes or stops. In Homarus americanus (American lobster), this protein is Crustacean hyperglycemic hormones isoform A.